A 90-amino-acid polypeptide reads, in one-letter code: Small ribosomal subunit protein uS15c (90 aa).

Belongs to the universal ribosomal protein uS15 family. Part of the 30S ribosomal subunit.

It localises to the plastid. The protein resides in the chloroplast. The sequence is that of Small ribosomal subunit protein uS15c (rps15) from Phaseolus vulgaris (Kidney bean).